The following is a 413-amino-acid chain: Arginine biosynthesis bifunctional protein ArgJ (413 aa).

Threonine 154, lysine 180, threonine 191, glutamate 277, asparagine 408, and threonine 413 together coordinate substrate. Residue threonine 191 is the Nucleophile of the active site.

This sequence belongs to the ArgJ family. In terms of assembly, heterotetramer of two alpha and two beta chains.

It is found in the cytoplasm. The catalysed reaction is N(2)-acetyl-L-ornithine + L-glutamate = N-acetyl-L-glutamate + L-ornithine. The enzyme catalyses L-glutamate + acetyl-CoA = N-acetyl-L-glutamate + CoA + H(+). It functions in the pathway amino-acid biosynthesis; L-arginine biosynthesis; L-ornithine and N-acetyl-L-glutamate from L-glutamate and N(2)-acetyl-L-ornithine (cyclic): step 1/1. It participates in amino-acid biosynthesis; L-arginine biosynthesis; N(2)-acetyl-L-ornithine from L-glutamate: step 1/4. Functionally, catalyzes two activities which are involved in the cyclic version of arginine biosynthesis: the synthesis of N-acetylglutamate from glutamate and acetyl-CoA as the acetyl donor, and of ornithine by transacetylation between N(2)-acetylornithine and glutamate. The polypeptide is Arginine biosynthesis bifunctional protein ArgJ (Synechocystis sp. (strain ATCC 27184 / PCC 6803 / Kazusa)).